We begin with the raw amino-acid sequence, 187 residues long: Ras-like protein rasD (187 aa).

10–17 (GGGGVGKS) lines the GTP pocket. Positions 32 to 40 (YDPTIEDSY) match the Effector region motif. Residues 57–61 (DTAGQ) and 116–119 (NKAD) contribute to the GTP site. Cys-184 is subject to Cysteine methyl ester. Residue Cys-184 is the site of S-geranylgeranyl cysteine attachment. Residues 185–187 (LIL) constitute a propeptide, removed in mature form.

This sequence belongs to the small GTPase superfamily. Ras family.

The protein localises to the cell membrane. It carries out the reaction GTP + H2O = GDP + phosphate + H(+). With respect to regulation, alternates between an inactive form bound to GDP and an active form bound to GTP. Activated by a guanine nucleotide-exchange factor (GEF) and inactivated by a GTPase-activating protein (GAP). Functionally, ras proteins bind GDP/GTP and possess intrinsic GTPase activity. In Dictyostelium discoideum (Social amoeba), this protein is Ras-like protein rasD (rasD).